An 89-amino-acid chain; its full sequence is Small ribosomal subunit protein uS17 (89 aa).

The protein belongs to the universal ribosomal protein uS17 family. As to quaternary structure, part of the 30S ribosomal subunit.

In terms of biological role, one of the primary rRNA binding proteins, it binds specifically to the 5'-end of 16S ribosomal RNA. This is Small ribosomal subunit protein uS17 from Xylella fastidiosa (strain 9a5c).